Consider the following 203-residue polypeptide: dTTP/UTP pyrophosphatase (203 aa).

The active-site Proton acceptor is the aspartate 74.

Belongs to the Maf family. YhdE subfamily. A divalent metal cation is required as a cofactor.

The protein resides in the cytoplasm. It carries out the reaction dTTP + H2O = dTMP + diphosphate + H(+). The enzyme catalyses UTP + H2O = UMP + diphosphate + H(+). Nucleoside triphosphate pyrophosphatase that hydrolyzes dTTP and UTP. May have a dual role in cell division arrest and in preventing the incorporation of modified nucleotides into cellular nucleic acids. The protein is dTTP/UTP pyrophosphatase of Treponema denticola (strain ATCC 35405 / DSM 14222 / CIP 103919 / JCM 8153 / KCTC 15104).